We begin with the raw amino-acid sequence, 161 residues long: Phosphopantetheine adenylyltransferase (161 aa).

Residue Ser-10 participates in substrate binding. ATP is bound by residues 10 to 11 (SF) and His-18. Substrate is bound by residues Lys-42, Leu-74, and Arg-88. Residues 88–89 (RG), Glu-99, and 124–130 (YSFLSSS) each bind ATP.

Belongs to the bacterial CoaD family. Homohexamer. Mg(2+) serves as cofactor.

It localises to the cytoplasm. The catalysed reaction is (R)-4'-phosphopantetheine + ATP + H(+) = 3'-dephospho-CoA + diphosphate. Its pathway is cofactor biosynthesis; coenzyme A biosynthesis; CoA from (R)-pantothenate: step 4/5. In terms of biological role, reversibly transfers an adenylyl group from ATP to 4'-phosphopantetheine, yielding dephospho-CoA (dPCoA) and pyrophosphate. The polypeptide is Phosphopantetheine adenylyltransferase (Bacillus subtilis (strain 168)).